The sequence spans 532 residues: Egg peptide speract receptor (532 aa).

An N-terminal signal peptide occupies residues 1–30 (MGLPMMLQQYCWAACLVICIAISSVDDVGA). Residues 31–491 (EQNYGREAVE…VVCEGSTAPP (461 aa)) lie on the Extracellular side of the membrane. 4 consecutive SRCR domains span residues 43–144 (IRLI…VECL), 153–257 (LRMI…VVCK), 264–366 (IRLM…VVCA), and 382–485 (VRIV…VVCE). Disulfide bonds link Cys-68–Cys-133, Cys-81–Cys-143, Cys-112–Cys-122, Cys-178–Cys-244, Cys-191–Cys-256, Cys-223–Cys-233, Cys-289–Cys-355, Cys-302–Cys-365, Cys-335–Cys-345, Cys-406–Cys-475, Cys-419–Cys-484, and Cys-454–Cys-465. Asn-78 and Asn-115 each carry an N-linked (GlcNAc...) asparagine glycan. Residue Asn-459 is glycosylated (N-linked (GlcNAc...) asparagine). A helical membrane pass occupies residues 492–520 (SGMSIAVIGGAAGGGVAGLAVAAFAFYYI). The Cytoplasmic segment spans residues 521 to 532 (KFVKPAGGGGQA).

It is found in the membrane. In terms of biological role, receptor for the egg peptide speract. The polypeptide is Egg peptide speract receptor (Strongylocentrotus purpuratus (Purple sea urchin)).